A 569-amino-acid polypeptide reads, in one-letter code: Ribosome-inactivating protein SNAI' (569 aa).

A signal peptide spans 1–28 (MKVVATILYLVVLAICGLGIHGAHPTHS). N-linked (GlcNAc...) asparagine glycosylation is present at N40. The active site involves E201. 3 cysteine pairs are disulfide-bonded: C286/C311, C328/C347, and C369/C381. 2 Ricin B-type lectin domains span residues 315 to 435 (EEVT…WIVG) and 437 to 565 (VEPL…WIAS). The 1-alpha repeat unit spans residues 325–365 (DGFCAEVKNGDEKDGTPVQLSSCGEQSNQQWTFSTDGTIQS). One copy of the 1-beta repeat lies at 366 to 401 (LGKCLTTSSSVMIYNCKVVPPESTKWVVSIDGTITN). Residues 404-436 (SGLVLTAPKAAEGTLVSLEKNVHAARQGWIVGN) form a 1-gamma repeat. Residues 448–488 (EQMCLETNPGNNDVSLGDCSVKSASKVDQKWALYGDGTIRV) form a 2-alpha repeat. 2 cysteine pairs are disulfide-bonded: C451–C466 and C495–C512. Residues 492–530 (RSLCVTSEGKSSNEPIIILKCLGWANQRWVFNTDGTISN) form a 2-beta repeat. A 2-gamma repeat occupies 533–566 (SKLVMHVDQNDVPLRKIILSHPSGTSNQQWIAST).

This sequence in the N-terminal section; belongs to the ribosome-inactivating protein family. Type 2 RIP subfamily. In terms of assembly, disulfide-linked dimer of A and B chains.

It catalyses the reaction Endohydrolysis of the N-glycosidic bond at one specific adenosine on the 28S rRNA.. Its function is as follows. The A chain is responsible for inhibiting protein synthesis through the catalytic inactivation of 60S ribosomal subunits by removing adenine from position 4,324 of 28S rRNA. The B chain binds to cell receptors and probably facilitates the entry into the cell of the A chain; B chains are also responsible for cell agglutination (lectin activity). Agglutination is inhibited by Neu5Ac(alpha2,6)lactose, and N-linked glycoproteins such as fetuin and orosomucoid. The chain is Ribosome-inactivating protein SNAI' from Sambucus nigra (European elder).